The following is a 362-amino-acid chain: Tyrosyl-DNA phosphodiesterase 2 (362 aa).

Residue Met1 is modified to N-acetylmethionine. Residues 1 to 20 (MELGSCLEGGREAAEEEGEP) are disordered. Residues Lys23 and Lys82 each participate in a glycyl lysine isopeptide (Lys-Gly) (interchain with G-Cter in SUMO2) cross-link. Residues 87-109 (LTNEETTDSTTSKISPSEDTQQE) are disordered. Thr88 and Thr92 each carry phosphothreonine; by ACVR1B. The span at 94–109 (DSTTSKISPSEDTQQE) shows a compositional bias: polar residues. Residue Ser95 is modified to Phosphoserine. Residues 120–124 (NIDGL) are interaction with 5' end of substrate DNA. Mg(2+)-binding residues include Asp122 and Glu152. The interaction with 5' end of substrate DNA stretch occupies residues 226 to 231 (HLESTR). The active-site Proton donor/acceptor is the Asp262. The interval 264–266 (NLR) is interaction with 5' end of substrate DNA.

The protein belongs to the CCR4/nocturin family. Interacts with TRAF2, TRAF3, TRAF5, TRAF6, TNFRSF8/CD30, TNFRSF5/CD40, TNFRSF1B/TNF-R75, ETS1, ETS2, FLI1, SMAD3 and ACVR1B/ALK4. As to quaternary structure, (Microbial infection) Interacts with Hantaan hantavirus nucleoprotein. In terms of assembly, (Microbial infection) Interacts with Seoul hantavirus nucleoprotein. Mg(2+) serves as cofactor. The cofactor is Mn(2+). Ubiquitinated by TRAF6. As to expression, widely expressed. Highly expressed in various brain regions, including the frontal and occipital lobes, the hippocampus, the striatum and the cerebellum.

It localises to the nucleus. The protein localises to the PML body. It is found in the nucleolus. The protein resides in the cytoplasm. Its function is as follows. DNA repair enzyme that can remove a variety of covalent adducts from DNA through hydrolysis of a 5'-phosphodiester bond, giving rise to DNA with a free 5' phosphate. Catalyzes the hydrolysis of dead-end complexes between DNA and the topoisomerase 2 (TOP2) active site tyrosine residue. The 5'-tyrosyl DNA phosphodiesterase activity can enable the repair of TOP2-induced DNA double-strand breaks/DSBs without the need for nuclease activity, creating a 'clean' DSB with 5'-phosphate termini that are ready for ligation. Thereby, protects the transcription of many genes involved in neurological development and maintenance from the abortive activity of TOP2. Hydrolyzes 5'-phosphoglycolates on protruding 5' ends on DSBs due to DNA damage by radiation and free radicals. Has preference for single-stranded DNA or duplex DNA with a 4 base pair overhang as substrate. Acts as a regulator of ribosome biogenesis following stress. Also has 3'-tyrosyl DNA phosphodiesterase activity, but less efficiently and much slower than TDP1. Constitutes the major if not only 5'-tyrosyl-DNA phosphodiesterase in cells. Also acts as an adapter by participating in the specific activation of MAP3K7/TAK1 in response to TGF-beta: associates with components of the TGF-beta receptor-TRAF6-TAK1 signaling module and promotes their ubiquitination dependent complex formation. Involved in non-canonical TGF-beta induced signaling routes. May also act as a negative regulator of ETS1 and may inhibit NF-kappa-B activation. In terms of biological role, (Microbial infection) Used by picornaviruses to remove the small polypeptide, VPg (virus Protein genome-linked, the primer for viral RNA synthesis), from the genomic RNA of the virus. Acts as a 5'-tyrosyl RNA phosphodiesterase and cleaves the covalent VPg-Tyr-RNA bond. This cleavage would play a role in viral replication and occur in viral replication vesicles, but would not act on viral mRNA. The protein is Tyrosyl-DNA phosphodiesterase 2 of Homo sapiens (Human).